The following is a 351-amino-acid chain: dTDP-glucose 4,6-dehydratase (351 aa).

Residues 12–13, 32–35, 58–59, 80–84, and T99 each bind NAD(+); these read FI, DALT, DI, and FAAES. Residue S84 participates in substrate binding. T133 is a substrate binding site. D134 (proton donor) is an active-site residue. Catalysis depends on proton acceptor residues E135 and Y158. 158-162 is an NAD(+) binding site; the sequence is YSASK. Residue N187 participates in substrate binding. N188 is a binding site for NAD(+). Substrate is bound by residues 197 to 198, 213 to 215, R222, N257, and 289 to 293; these read KL, PVY, and DRPGH.

It belongs to the NAD(P)-dependent epimerase/dehydratase family. dTDP-glucose dehydratase subfamily. As to quaternary structure, homodimer. NAD(+) is required as a cofactor.

The catalysed reaction is dTDP-alpha-D-glucose = dTDP-4-dehydro-6-deoxy-alpha-D-glucose + H2O. The protein operates within carbohydrate biosynthesis; dTDP-L-rhamnose biosynthesis. It participates in bacterial outer membrane biogenesis; LPS O-antigen biosynthesis. Its function is as follows. Catalyzes the dehydration of dTDP-D-glucose to form dTDP-6-deoxy-D-xylo-4-hexulose via a three-step process involving oxidation, dehydration and reduction. This is dTDP-glucose 4,6-dehydratase (rfbB) from Xanthomonas campestris pv. campestris (strain ATCC 33913 / DSM 3586 / NCPPB 528 / LMG 568 / P 25).